The sequence spans 532 residues: Flavin-containing monooxygenase 1 (532 aa).

The Lumenal segment spans residues 1–510 (MVKRVAIVGA…TRTIQESPSS (510 aa)). FAD-binding positions include 9–13 (GAGVS), E32, 40–41 (LW), and 61–62 (NS). NADP(+)-binding positions include 60–61 (SN) and 195–198 (SGTD). A helical transmembrane segment spans residues 511-531 (FETLLKLFSFLALLIAVFLIF). A topological domain (cytoplasmic) is located at residue L532.

This sequence belongs to the FMO family. FAD serves as cofactor. Liver.

It is found in the endoplasmic reticulum membrane. It catalyses the reaction hypotaurine + NADPH + O2 + H(+) = taurine + NADP(+) + H2O. The enzyme catalyses hypotaurine + NADH + O2 + H(+) = taurine + NAD(+) + H2O. The catalysed reaction is trimethylamine + NADPH + O2 = trimethylamine N-oxide + NADP(+) + H2O. It carries out the reaction N,N-dimethylaniline + NADPH + O2 + H(+) = N,N-dimethylaniline N-oxide + NADP(+) + H2O. In terms of biological role, broad spectrum monooxygenase that catalyzes the oxygenation of a wide variety of nitrogen- and sulfur-containing compounds including xenobiotics. Catalyzes the S-oxygenation of hypotaurine to produce taurine, an organic osmolyte involved in cell volume regulation as well as a variety of cytoprotective and developmental processes. In vitro, catalyzes the N-oxygenation of trimethylamine (TMA) to produce trimethylamine N-oxide (TMAO) and could therefore participate to the detoxification of this compound that is generated by the action of gut microbiota from dietary precursors such as choline, choline containing compounds, betaine or L-carnitine. The chain is Flavin-containing monooxygenase 1 from Mus musculus (Mouse).